Consider the following 159-residue polypeptide: Large ribosomal subunit protein uL10 (159 aa).

Belongs to the universal ribosomal protein uL10 family. In terms of assembly, part of the ribosomal stalk of the 50S ribosomal subunit. The N-terminus interacts with L11 and the large rRNA to form the base of the stalk. The C-terminus forms an elongated spine to which L12 dimers bind in a sequential fashion forming a multimeric L10(L12)X complex.

Functionally, forms part of the ribosomal stalk, playing a central role in the interaction of the ribosome with GTP-bound translation factors. In Sulfurimonas denitrificans (strain ATCC 33889 / DSM 1251) (Thiomicrospira denitrificans (strain ATCC 33889 / DSM 1251)), this protein is Large ribosomal subunit protein uL10.